Consider the following 556-residue polypeptide: 2-succinyl-5-enolpyruvyl-6-hydroxy-3-cyclohexene-1-carboxylate synthase (556 aa).

This sequence belongs to the TPP enzyme family. MenD subfamily. In terms of assembly, homodimer. Requires Mg(2+) as cofactor. Mn(2+) serves as cofactor. The cofactor is thiamine diphosphate.

The enzyme catalyses isochorismate + 2-oxoglutarate + H(+) = 5-enolpyruvoyl-6-hydroxy-2-succinyl-cyclohex-3-ene-1-carboxylate + CO2. It functions in the pathway quinol/quinone metabolism; 1,4-dihydroxy-2-naphthoate biosynthesis; 1,4-dihydroxy-2-naphthoate from chorismate: step 2/7. It participates in quinol/quinone metabolism; menaquinone biosynthesis. In terms of biological role, catalyzes the thiamine diphosphate-dependent decarboxylation of 2-oxoglutarate and the subsequent addition of the resulting succinic semialdehyde-thiamine pyrophosphate anion to isochorismate to yield 2-succinyl-5-enolpyruvyl-6-hydroxy-3-cyclohexene-1-carboxylate (SEPHCHC). The sequence is that of 2-succinyl-5-enolpyruvyl-6-hydroxy-3-cyclohexene-1-carboxylate synthase from Mycobacterium leprae (strain Br4923).